The chain runs to 314 residues: DegV domain-containing protein XAC3508 (314 aa).

Positions 3-307 (IGIVVDSACD…KGALAVGFAA (305 aa)) constitute a DegV domain. Hexadecanoate is bound by residues Thr-63 and Ser-96.

Its function is as follows. May bind long-chain fatty acids, such as palmitate, and may play a role in lipid transport or fatty acid metabolism. The chain is DegV domain-containing protein XAC3508 from Xanthomonas axonopodis pv. citri (strain 306).